Consider the following 394-residue polypeptide: Elongation factor Tu (394 aa).

The tr-type G domain maps to 10-204; that stretch reads KPHVNIGTIG…AVDSYIPQPI (195 aa). The segment at 19 to 26 is G1; the sequence is GHVDHGKT. GTP is bound at residue 19–26; that stretch reads GHVDHGKT. Residue T26 participates in Mg(2+) binding. The G2 stretch occupies residues 60–64; it reads GITIS. Positions 81–84 are G3; sequence DCPG. GTP is bound by residues 81–85 and 136–139; these read DCPGH and NKVD. Residues 136 to 139 are G4; sequence NKVD. The interval 174 to 176 is G5; sequence SAL.

Belongs to the TRAFAC class translation factor GTPase superfamily. Classic translation factor GTPase family. EF-Tu/EF-1A subfamily. In terms of assembly, monomer.

The protein resides in the cytoplasm. It carries out the reaction GTP + H2O = GDP + phosphate + H(+). Its function is as follows. GTP hydrolase that promotes the GTP-dependent binding of aminoacyl-tRNA to the A-site of ribosomes during protein biosynthesis. The protein is Elongation factor Tu of Rickettsia prowazekii (strain Madrid E).